A 558-amino-acid chain; its full sequence is Aspartate--tRNA ligase 2, cytoplasmic (558 aa).

Low complexity predominate over residues 1-18 (MSSESEIPPLSSSTAAAE). Residues 1-57 (MSSESEIPPLSSSTAAAEESGEKTSKKAAKKEAAKLEKLRRRQEQEEATRRTASISL) form a disordered region. Residue Ser-2 is modified to N-acetylserine. Positions 20–50 (SGEKTSKKAAKKEAAKLEKLRRRQEQEEATR) are enriched in basic and acidic residues. Positions 110 to 195 (VLIRGRVHTN…QVEIQVRKVY (86 aa)) form a DNA-binding region, OB. L-aspartate is bound at residue Glu-286. An aspartate region spans residues 308–311 (QLHK). Arg-330 serves as a coordination point for L-aspartate. ATP is bound by residues 330 to 332 (RAE), 338 to 340 (RHL), and Glu-481. Mg(2+)-binding residues include Glu-481 and Ser-484. 2 residues coordinate L-aspartate: Ser-484 and Arg-488. ATP is bound at residue 529–532 (GLER).

The protein belongs to the class-II aminoacyl-tRNA synthetase family. Type 2 subfamily.

Its subcellular location is the cytoplasm. The protein localises to the cytosol. It localises to the endoplasmic reticulum. The catalysed reaction is tRNA(Asp) + L-aspartate + ATP = L-aspartyl-tRNA(Asp) + AMP + diphosphate. Catalyzes the specific attachment of an amino acid to its cognate tRNA in a 2 step reaction: the amino acid (AA) is first activated by ATP to form AA-AMP and then transferred to the acceptor end of the tRNA. Involved in the perception of beta-aminobutyric acid (BABA) and required for BABA priming effect in disease resistance. The sequence is that of Aspartate--tRNA ligase 2, cytoplasmic from Arabidopsis thaliana (Mouse-ear cress).